Reading from the N-terminus, the 1023-residue chain is 2-oxoglutarate dehydrogenase complex component E1 (1023 aa).

The N-terminal 40 residues, 1–40, are a transit peptide targeting the mitochondrion; the sequence is MFHLRTCAAKLRPLTASQTVKTFSQNRPAAARTFQQIRCY. N6-succinyllysine is present on lysine 74. At serine 100 the chain carries Phosphoserine. Ca(2+) is bound by residues histidine 143, aspartate 156, and aspartate 158. A thiamine diphosphate-binding site is contributed by arginine 312. Lysine 401 bears the N6-acetyllysine mark. Thiamine diphosphate contacts are provided by aspartate 411, asparagine 444, and isoleucine 446. Aspartate 411, asparagine 444, and isoleucine 446 together coordinate Mg(2+). A Glycyl lysine isopeptide (Lys-Gly) (interchain with G-Cter in ubiquitin) cross-link involves residue lysine 534. N6-succinyllysine is present on lysine 564. Residue glutamine 676 coordinates thiamine diphosphate. Residue lysine 970 is modified to N6-acetyllysine.

The protein belongs to the alpha-ketoglutarate dehydrogenase family. In terms of assembly, homodimer. The 2-oxoglutarate dehydrogenase complex is composed of OGDH (2-oxoglutarate dehydrogenase; E1), DLST (dihydrolipoamide succinyltransferase; E2), DLD (dihydrolipoamide dehydrogenase; E3), and the assembly factor KGD4. It contains multiple copies of the three enzymatic components (E1, E2 and E3). In the nucleus, the 2-oxoglutarate dehydrogenase complex associates with KAT2A. Interacts with ABHD11; this interaction maintains the functional lipoylation of the 2-oxoglutarate dehydrogenase complex. Thiamine diphosphate serves as cofactor. Requires Mg(2+) as cofactor.

Its subcellular location is the mitochondrion. It localises to the nucleus. It carries out the reaction N(6)-[(R)-lipoyl]-L-lysyl-[protein] + 2-oxoglutarate + H(+) = N(6)-[(R)-S(8)-succinyldihydrolipoyl]-L-lysyl-[protein] + CO2. With respect to regulation, calcium ions and ADP stimulate, whereas ATP and NADH reduce catalytic activity. In terms of biological role, 2-oxoglutarate dehydrogenase (E1o) component of the 2-oxoglutarate dehydrogenase complex (OGDHC). Participates in the first step, rate limiting for the overall conversion of 2-oxoglutarate to succinyl-CoA and CO(2) catalyzed by the whole OGDHC. Catalyzes the irreversible decarboxylation of 2-oxoglutarate (alpha-ketoglutarate) via the thiamine diphosphate (ThDP) cofactor and subsequent transfer of the decarboxylated acyl intermediate on an oxidized dihydrolipoyl group that is covalently amidated to the E2 enzyme (dihydrolipoyllysine-residue succinyltransferase or DLST). Plays a key role in the Krebs (citric acid) cycle, which is a common pathway for oxidation of fuel molecules, including carbohydrates, fatty acids, and amino acids. Can catalyze the decarboxylation of 2-oxoadipate in vitro, but at a much lower rate than 2-oxoglutarate. Mainly active in the mitochondrion. A fraction of the 2-oxoglutarate dehydrogenase complex also localizes in the nucleus and is required for lysine succinylation of histones: associates with KAT2A on chromatin and provides succinyl-CoA to histone succinyltransferase KAT2A. This is 2-oxoglutarate dehydrogenase complex component E1 from Homo sapiens (Human).